The sequence spans 261 residues: uncharacterized protein (261 aa).

A disordered region spans residues 1-22 (MAETTEPPSDAGTSQADAMALA). The helical transmembrane segment at 107-127 (IAMAAAVVIICGFTGLSGYIV) threads the bilayer.

This sequence to M.tuberculosis Rv1362c.

It is found in the membrane. This is an uncharacterized protein from Mycobacterium tuberculosis (strain ATCC 25618 / H37Rv).